Consider the following 1818-residue polypeptide: Nestin (1818 aa).

Residues 1–14 form a coil 1B region; the sequence is WREKLEAEVQRQNL. In terms of domain architecture, IF rod spans 1 to 135; sequence WREKLEAEVQ…TLLEAENSRL (135 aa). The interval 15–17 is linker 2; sequence YQE. The tract at residues 18–135 is coil 2B; that stretch reads RVAHMESSLG…TLLEAENSRL (118 aa). At Ser-133 the chain carries Phosphoserine. The interval 136–1818 is tail; that stretch reads QTPGRSSQAS…DRDSWSSGED (1683 aa). Residues Thr-137 and Thr-160 each carry the phosphothreonine modification. Ser-180 is modified (phosphoserine). Phosphothreonine is present on Thr-210. Disordered stretches follow at residues 266-309, 336-355, 377-451, and 480-787; these read EEAG…GSSI, AQETQEDGLHTEEIQDSQGP, HETP…SPEG, and AFKK…EEDQ. A Phosphoserine modification is found at Ser-288. Residues 292 to 303 are compositionally biased toward basic and acidic residues; sequence PVLEAKDGDSTE. Positions 382 to 398 are enriched in polar residues; sequence KENCNSLRSVDENQGTL. Residues Ser-390 and Ser-400 each carry the phosphoserine modification. 2 stretches are compositionally biased toward basic and acidic residues: residues 400 to 427 and 434 to 443; these read SPEEEKQTLLKSLEEKDVEVEKTLEKGV and LGKEDPRIED. Ser-448 bears the Phosphoserine mark. A compositionally biased stretch (basic and acidic residues) spans 495 to 508; the sequence is EIQRVERLIEKEGQ. Ser-513 is subject to Phosphoserine. Basic and acidic residues-rich tracts occupy residues 521 to 536 and 565 to 586; these read TDRPLEKENGEPLKPV and TDRPLEKEEDQLVERLVEKEGQ. Ser-591 carries the post-translational modification Phosphoserine. Basic and acidic residues-rich tracts occupy residues 599–614, 643–664, and 711–732; these read TDRPLEKENGEPLKPV, TDRPLEKEEDQLVERLVEKEGQ, and TDRPLEKEEDQRVERLIEKEGQ. Ser-737 carries the post-translational modification Phosphoserine. The span at 744 to 773 shows a compositional bias: basic and acidic residues; that stretch reads ETYRLLEKENGEPLKPVEEEDQRVERLIEK. Phosphoserine occurs at positions 803 and 824. The interval 866-900 is disordered; it reads ESLLKKGTQESLESHEDRNQETQDPQRFLEEEGQG. The span at 868 to 886 shows a compositional bias: basic and acidic residues; it reads LLKKGTQESLESHEDRNQE. Phosphoserine is present on residues Ser-915 and Ser-957. Positions 945–998 are disordered; the sequence is SLLERESQDSGKSLEGQEAFRCLGKEDPESLQFPEVQDQEIQRSLQQETQQTLG. A compositionally biased stretch (polar residues) spans 986-997; sequence QRSLQQETQQTL. A Glycyl lysine isopeptide (Lys-Gly) (interchain with G-Cter in SUMO1); alternate cross-link involves residue Lys-1043. Lys-1043 is covalently cross-linked (Glycyl lysine isopeptide (Lys-Gly) (interchain with G-Cter in SUMO2); alternate). Ser-1052, Ser-1063, Ser-1073, Ser-1123, Ser-1134, Ser-1162, and Ser-1238 each carry phosphoserine. 2 disordered regions span residues 1134 to 1262 and 1334 to 1818; these read SPEA…LEGQ and HPSL…SGED. Basic and acidic residues-rich tracts occupy residues 1342–1361 and 1401–1416; these read VEAKIAHDLEGPGKEPKEAG and ASDHEGSDAPEPRPSE. Over residues 1490 to 1505 the composition is skewed to acidic residues; sequence QDWEESREESEADELG. Phosphoserine is present on residues Ser-1495, Ser-1499, and Ser-1523. The span at 1570–1579 shows a compositional bias: acidic residues; it reads LSSEEFEDLG. Residues Ser-1614 and Ser-1623 each carry the phosphoserine modification. Residues 1616-1636 show a composition bias toward acidic residues; it reads GFADEEESGEEGEEEEHEDGT. Residues 1686-1697 are compositionally biased toward polar residues; the sequence is GLETESQDSAEP. Residues Ser-1698, Ser-1700, Ser-1791, Ser-1814, and Ser-1815 each carry the phosphoserine modification. Over residues 1698–1708 the composition is skewed to low complexity; the sequence is SGSEVSESVSS.

Belongs to the intermediate filament family. Interacts with FHOD3. Forms homodimers and homotetramers in vitro. In mixtures with other intermediate filament proteins such as vimentin and alpha-internexin, preferentially forms heterodimers which can assemble to form intermediate filaments if nestin does not exceed 25%. Constitutively phosphorylated. This increases during mitosis when the cytoplasmic intermediate filament network is reorganized.

Functionally, required for brain and eye development. Promotes the disassembly of phosphorylated vimentin intermediate filaments (IF) during mitosis and may play a role in the trafficking and distribution of IF proteins and other cellular factors to daughter cells during progenitor cell division. Required for survival, renewal and mitogen-stimulated proliferation of neural progenitor cells. This Mesocricetus auratus (Golden hamster) protein is Nestin.